The sequence spans 150 residues: 3-hydroxyacyl-[acyl-carrier-protein] dehydratase FabZ (150 aa).

Residue His-56 is part of the active site.

The protein belongs to the thioester dehydratase family. FabZ subfamily.

Its subcellular location is the cytoplasm. The enzyme catalyses a (3R)-hydroxyacyl-[ACP] = a (2E)-enoyl-[ACP] + H2O. Involved in unsaturated fatty acids biosynthesis. Catalyzes the dehydration of short chain beta-hydroxyacyl-ACPs and long chain saturated and unsaturated beta-hydroxyacyl-ACPs. The protein is 3-hydroxyacyl-[acyl-carrier-protein] dehydratase FabZ of Desulfotalea psychrophila (strain LSv54 / DSM 12343).